The following is a 201-amino-acid chain: tRNA (guanine-N(7)-)-methyltransferase (201 aa).

The S-adenosyl-L-methionine site is built by glutamate 33, glutamate 58, aspartate 85, and aspartate 106. Aspartate 106 is an active-site residue. Substrate contacts are provided by residues lysine 110, aspartate 142, and 180–183 (TTYE).

This sequence belongs to the class I-like SAM-binding methyltransferase superfamily. TrmB family.

It catalyses the reaction guanosine(46) in tRNA + S-adenosyl-L-methionine = N(7)-methylguanosine(46) in tRNA + S-adenosyl-L-homocysteine. It participates in tRNA modification; N(7)-methylguanine-tRNA biosynthesis. Functionally, catalyzes the formation of N(7)-methylguanine at position 46 (m7G46) in tRNA. This is tRNA (guanine-N(7)-)-methyltransferase from Mesomycoplasma hyopneumoniae (strain 232) (Mycoplasma hyopneumoniae).